The following is a 1283-amino-acid chain: Rab11 family-interacting protein 1 (1283 aa).

In terms of domain architecture, C2 spans 1-126 (MSLMVSAGRG…DQGRRKTQWY (126 aa)). The span at 161–185 (SMKDKSRNPFGKLKDKIKGKNKDSG) shows a compositional bias: basic and acidic residues. Residues 161–281 (SMKDKSRNPF…VMSHKRTAST (121 aa)) are disordered. Phosphoserine is present on residues serine 184, serine 202, serine 206, and serine 234. A compositionally biased stretch (polar residues) spans 225 to 239 (NLQKTPLSQSMSVLP). Residues 257–266 (WDEDDNEDES) show a composition bias toward acidic residues. A phosphoserine mark is found at serine 300, serine 315, serine 339, serine 341, serine 343, serine 345, serine 356, serine 357, and serine 382. Disordered regions lie at residues 330 to 727 (EAKG…QEVP), 741 to 782 (VGEL…ASVP), 835 to 913 (PQEL…LFRM), 969 to 993 (DERIDQVEDDGDQVEDDGETAKSST), and 1037 to 1141 (ASVT…RVEN). Residues 419–433 (ATKEAKESKKPESRR) show a composition bias toward basic and acidic residues. Serine 435 is subject to Phosphoserine. Basic and acidic residues predominate over residues 442-451 (GKKDVAKGSE). The residue at position 477 (serine 477) is a Phosphoserine. Basic and acidic residues predominate over residues 482–491 (DLVRRSEKDT). 2 positions are modified to phosphoserine: serine 529 and serine 545. Residues 588-612 (SSESPSVFSSLSSPIAAPISTSTPI) are compositionally biased toward low complexity. Positions 637–652 (QTESLTPVPNSGSSAL) are enriched in polar residues. A compositionally biased stretch (basic and acidic residues) spans 698–715 (ETGRQEEELPRFPCKKQD). The residue at position 758 (serine 758) is a Phosphoserine. The span at 855-866 (ESPHAEDSERES) shows a compositional bias: basic and acidic residues. A compositionally biased stretch (acidic residues) spans 975–986 (VEDDGDQVEDDG). The segment covering 1037-1048 (ASVTAPSEQTTE) has biased composition (polar residues). A compositionally biased stretch (basic and acidic residues) spans 1116–1131 (SDTHHTSTAESQKKAT). Serine 1135 carries the post-translational modification Phosphoserine. The region spanning 1211 to 1273 (KKYSPSDPAF…EETPNILRIP (63 aa)) is the FIP-RBD domain. A necessary for interaction with RAB4A and RAB11A, subcellular location and endosomal recycling region spans residues 1219 to 1283 (AFAYAQLTHD…TQVGKKAGKM (65 aa)).

As to quaternary structure, interacts with RAB11A (GTP-bound form); the interaction induces RAB11FIP1 recruitment to membranes. Interacts with RAB14 (GTP-bound form). In terms of assembly, homooligomer. Isoform 2 interacts with RAB4A, RAB11A, RAB11B and RAB25. According to PubMed:15280022, RAB4A binding to RAB11FIP1 is of very low affinity in vitro and in vivo. Isoform 2 is expressed in brain, heart, testis, lung, spleen, ovary and small intestine.

It localises to the recycling endosome. Its subcellular location is the cytoplasmic vesicle. The protein localises to the phagosome membrane. In terms of biological role, a Rab11 effector protein involved in the endosomal recycling process. Also involved in controlling membrane trafficking along the phagocytic pathway and in phagocytosis. Interaction with RAB14 may function in the process of neurite formation. The polypeptide is Rab11 family-interacting protein 1 (Homo sapiens (Human)).